A 381-amino-acid chain; its full sequence is Sulfate adenylyltransferase (381 aa).

This sequence belongs to the sulfate adenylyltransferase family.

It catalyses the reaction sulfate + ATP + H(+) = adenosine 5'-phosphosulfate + diphosphate. It participates in sulfur metabolism; hydrogen sulfide biosynthesis; sulfite from sulfate: step 1/3. The protein is Sulfate adenylyltransferase of Carboxydothermus hydrogenoformans (strain ATCC BAA-161 / DSM 6008 / Z-2901).